An 88-amino-acid chain; its full sequence is uncharacterized protein (88 aa).

The tract at residues 1 to 31 (MIPRDPRSPAPDLSAINQPAGRAERRSGPAT) is disordered.

This is an uncharacterized protein from Escherichia coli.